Consider the following 119-residue polypeptide: EVKLLESGGGLVQPGGSLKLSCAASGFDFSRYWMSWVRQAPGKGLEWIGEINPDSSTINYTPSLKDKFIISRDNAKNTLYLQMSKVRSEDTALYYCARLHYYGYAAYWGQGTLVTVSAE.

Residues 1–117 enclose the Ig-like domain; sequence EVKLLESGGG…WGQGTLVTVS (117 aa).

The polypeptide is Ig heavy chain V region X44 (Mus musculus (Mouse)).